The primary structure comprises 102 residues: ATP-dependent Clp protease adapter protein ClpS (102 aa).

This sequence belongs to the ClpS family. In terms of assembly, binds to the N-terminal domain of the chaperone ClpA.

Functionally, involved in the modulation of the specificity of the ClpAP-mediated ATP-dependent protein degradation. The polypeptide is ATP-dependent Clp protease adapter protein ClpS (Shewanella denitrificans (strain OS217 / ATCC BAA-1090 / DSM 15013)).